We begin with the raw amino-acid sequence, 161 residues long: Putative 4-hydroxy-4-methyl-2-oxoglutarate aldolase (161 aa).

Substrate-binding positions include 75–78 (GDML) and Arg97. Asp98 contributes to the a divalent metal cation binding site.

It belongs to the class II aldolase/RraA-like family. In terms of assembly, homotrimer. Requires a divalent metal cation as cofactor.

It catalyses the reaction 4-hydroxy-4-methyl-2-oxoglutarate = 2 pyruvate. The catalysed reaction is oxaloacetate + H(+) = pyruvate + CO2. In terms of biological role, catalyzes the aldol cleavage of 4-hydroxy-4-methyl-2-oxoglutarate (HMG) into 2 molecules of pyruvate. Also contains a secondary oxaloacetate (OAA) decarboxylase activity due to the common pyruvate enolate transition state formed following C-C bond cleavage in the retro-aldol and decarboxylation reactions. The polypeptide is Putative 4-hydroxy-4-methyl-2-oxoglutarate aldolase (Marinomonas sp. (strain MWYL1)).